Reading from the N-terminus, the 509-residue chain is Maturase K (509 aa).

This sequence belongs to the intron maturase 2 family. MatK subfamily.

It is found in the plastid. The protein localises to the chloroplast. Its function is as follows. Usually encoded in the trnK tRNA gene intron. Probably assists in splicing its own and other chloroplast group II introns. The protein is Maturase K of Nicotiana tomentosiformis (Tobacco).